A 539-amino-acid chain; its full sequence is Phosphatidylinositol 4-phosphate 5-kinase type-1 beta (539 aa).

Residues 1 to 21 form a disordered region; the sequence is MSSTAENGDAVPGKQNEEKTY. The region spanning 25–395 is the PIPK domain; sequence ASSAIKGAIQ…RFLKFMNSRV (371 aa). A phosphoserine mark is found at S445, S447, and S448.

As to quaternary structure, interacts with RAC1, AJUBA, PLD1, PLD2 and ARF1. Highly expressed in brain and testis. Barely detectable in liver and skeletal muscle.

The protein localises to the cytoplasm. Its subcellular location is the cytosol. The protein resides in the cell membrane. It localises to the endomembrane system. It carries out the reaction a 1,2-diacyl-sn-glycero-3-phospho-(1D-myo-inositol 4-phosphate) + ATP = a 1,2-diacyl-sn-glycero-3-phospho-(1D-myo-inositol-4,5-bisphosphate) + ADP + H(+). The catalysed reaction is 1-octadecanoyl-2-(5Z,8Z,11Z,14Z)-eicosatetraenoyl-sn-glycero-3-phospho-1D-myo-inositol 4-phosphate + ATP = 1-octadecanoyl-2-(5Z,8Z,11Z,14Z)-eicosatetraenoyl-sn-glycero-3-phospho-1D-myo-inositol 4,5-bisphosphate + ADP + H(+). The enzyme catalyses 1-octadecanoyl-2-(9Z)-octadecenoyl-sn-glycero-3-phospho-1D-myo-inositol 4-phosphate + ATP = 1-octadecanoyl-2-(9Z)-octadecenoyl-sn-glycero-3-phospho-1D-myo-inositol 4,5-bisphosphate + ADP + H(+). It catalyses the reaction 1-octadecanoyl-2-(9Z)-octadecenoyl-sn-glycero-3-phospho-1D-myo-inositol + ATP = 1-octadecanoyl-2-(9Z)-octadecenoyl-sn-glycero-3-phospho-1D-myo-inositol 5-phosphate + ADP + H(+). It carries out the reaction 1-octadecanoyl-2-(9Z,12Z)-octadecadienoyl-sn-glycero-3-phospho-1D-myo-inositol + ATP = 1-octadecanoyl-2-(9Z,12Z)-octadecadienoyl-sn-glycero-3-phospho-1D-myo-inositol 5-phosphate + ADP + H(+). The catalysed reaction is 1-octadecanoyl-2-(5Z,8Z,11Z,14Z-eicosatetraenoyl)-sn-glycero-3-phospho-(1D-myo-inositol) + ATP = 1-octadecanoyl-2-(5Z,8Z,11Z,14Z)-eicosatetraenoyl-sn-glycero-3-phospho-1D-myo-inositol 5-phosphate + ADP + H(+). The enzyme catalyses 1,2-di-(9Z,12Z)-octadecadienoyl-sn-glycero-3-phospho-1D-myo-inositol + ATP = 1,2-di(9Z,12Z)-octadecadienoyl-sn-glycero-3-phospho-1D-myo-inositol 5-phosphate + ADP + H(+). Its activity is regulated as follows. Activated by phosphatidic acid. Its function is as follows. Catalyzes the phosphorylation of phosphatidylinositol 4-phosphate (PtdIns(4)P/PI4P) to form phosphatidylinositol 4,5-bisphosphate (PtdIns(4,5)P2/PIP2), a lipid second messenger that regulates several cellular processes such as signal transduction, vesicle trafficking, actin cytoskeleton dynamics, cell adhesion, and cell motility. PtdIns(4,5)P2 can directly act as a second messenger or can be utilized as a precursor to generate other second messengers: inositol 1,4,5-trisphosphate (IP3), diacylglycerol (DAG) or phosphatidylinositol-3,4,5-trisphosphate (PtdIns(3,4,5)P3/PIP3). Mediates RAC1-dependent reorganization of actin filaments. Contributes to the activation of phospholipase PLD2. Together with PIP5K1A, is required, after stimulation by G-protein coupled receptors, for the synthesis of IP3 that will induce stable platelet adhesion. The polypeptide is Phosphatidylinositol 4-phosphate 5-kinase type-1 beta (Mus musculus (Mouse)).